The following is a 907-amino-acid chain: Lipoxygenase 1, chloroplastic (907 aa).

The transit peptide at 1–49 (MALAKQIMGASLMDQKTSVFGSNLCLNHVLVNKHRLRLRKTRKNGSMVV) directs the protein to the chloroplast. In terms of domain architecture, PLAT spans 85-209 (DFFKDTIFRK…DLPNPRIFFT (125 aa)). Residues 212–907 (PYLPDETPVG…CRGVPNSISI (696 aa)) enclose the Lipoxygenase domain. Residues histidine 567, histidine 572, histidine 758, asparagine 762, and isoleucine 907 each contribute to the Fe cation site.

This sequence belongs to the lipoxygenase family. Fe cation serves as cofactor. Confined to glandular trichomes in flowers, and, at low levels, in leaves.

The protein localises to the plastid. The protein resides in the chloroplast. The catalysed reaction is (9Z,12Z,15Z)-octadecatrienoate + O2 = 13-hydroperoxy-(9Z,11E,15Z)-octadecatrienoate. It functions in the pathway lipid metabolism; oxylipin biosynthesis. The protein operates within isoprenoid biosynthesis. Component of the monoterpenoid pyrethrins biosynthesis; pyrethrins are widely used plant-derived pesticide. Plant lipoxygenases may be involved in a number of diverse aspects of plant physiology including growth and development, pest resistance, and senescence or responses to wounding. Catalyzes the hydroperoxidation of lipids containing a cis,cis-1,4-pentadiene structure. Mediates the peroxidation of linolenic acid leading to the production of 13-hydroperoxylinolenic acid. The sequence is that of Lipoxygenase 1, chloroplastic from Tanacetum cinerariifolium (Dalmatian daisy).